A 252-amino-acid chain; its full sequence is Triosephosphate isomerase (252 aa).

Asn-10 to Lys-12 serves as a coordination point for substrate. His-96 acts as the Electrophile in catalysis. Glu-168 (proton acceptor) is an active-site residue. Substrate contacts are provided by residues Gly-174, Ser-214, and Gly-235–Gly-236.

It belongs to the triosephosphate isomerase family. In terms of assembly, homodimer.

The protein resides in the cytoplasm. It carries out the reaction D-glyceraldehyde 3-phosphate = dihydroxyacetone phosphate. It participates in carbohydrate biosynthesis; gluconeogenesis. Its pathway is carbohydrate degradation; glycolysis; D-glyceraldehyde 3-phosphate from glycerone phosphate: step 1/1. In terms of biological role, involved in the gluconeogenesis. Catalyzes stereospecifically the conversion of dihydroxyacetone phosphate (DHAP) to D-glyceraldehyde-3-phosphate (G3P). This Lactococcus lactis subsp. cremoris (strain MG1363) protein is Triosephosphate isomerase.